Consider the following 247-residue polypeptide: 5-hydroxytryptamine receptor 2A (247 aa).

Position 1 (Lys-1) is a topological domain, extracellular. The chain crosses the membrane as a helical span at residues 2-26 (LCAIWIYLDVLFSTASIMHLCAISL). A disulfide bridge links Cys-3 with Cys-82. Position 10 (Asp-10) interacts with serotonin. The DRY motif; important for ligand-induced conformation changes signature appears at 27–29 (DRY). The Cytoplasmic segment spans residues 27–46 (DRYVAIQNPIHHSRFNSRTK). A helical membrane pass occupies residues 47 to 70 (AFLKIIAVWTISVGISMPVPVFGL). At 71–87 (QDDSKVFKEGSCLLADD) the chain is on the extracellular side. The chain crosses the membrane as a helical span at residues 88–113 (NFVLIGSFVAFFIPLTIMVITYFLTI). Residues 114 to 177 (KSLQKEATLC…QSISNEQKAC (64 aa)) lie on the Cytoplasmic side of the membrane. Ser-135 is subject to Phosphoserine. A helical membrane pass occupies residues 178–203 (KVLGIVFFLFVVMWCPFFVTNIMAVI). Asn-198 serves as a coordination point for serotonin. Cysteines 204 and 208 form a disulfide. The Extracellular segment spans residues 204–211 (CKESCNED). Residues 212 to 237 (VIGALLNVFVWIGYLSSAVNPLVYTL) traverse the membrane as a helical segment. An NPxxY motif; important for ligand-induced conformation changes and signaling motif is present at residues 231 to 235 (NPLVY). The Cytoplasmic segment spans residues 238-247 (FNKTYRSAFA).

It belongs to the G-protein coupled receptor 1 family. In terms of assembly, interacts (via C-terminus) with MPDZ and PATJ. May interact (via C-terminus) with MPP3, PRDX6, DLG4, DLG1, CASK, APBA1 and MAGI2. Interacts with GRM2 and DRD2; this may affect signaling. In terms of tissue distribution, detected in adult intestine, especially in mucosal epithelium, longitudinal and circular layers of muscularis externa and myenteric plexuses. Highly expressed in Paneth cells, and detected at lower levels in enterocytes (at protein level).

The protein localises to the cell membrane. It is found in the cell projection. The protein resides in the dendrite. Its subcellular location is the axon. It localises to the cytoplasmic vesicle. The protein localises to the membrane. It is found in the caveola. The protein resides in the presynapse. With respect to regulation, G-protein coupled receptor activity is regulated by lipids: oleamide increases HTR2A-mediated activity. Its function is as follows. G-protein coupled receptor for 5-hydroxytryptamine (serotonin). Also functions as a receptor for various drugs and psychoactive substances, including mescaline, psilocybin, 1-(2,5-dimethoxy-4-iodophenyl)-2-aminopropane (DOI) and lysergic acid diethylamide (LSD). Ligand binding causes a conformation change that triggers signaling via guanine nucleotide-binding proteins (G proteins) and modulates the activity of downstream effectors. HTR2A is coupled to G(q)/G(11) G alpha proteins and activates phospholipase C-beta, releasing diacylglycerol (DAG) and inositol 1,4,5-trisphosphate (IP3) second messengers that modulate the activity of phosphatidylinositol 3-kinase and promote the release of Ca(2+) ions from intracellular stores, respectively. Beta-arrestin family members inhibit signaling via G proteins and mediate activation of alternative signaling pathways. Affects neural activity, perception, cognition and mood. Plays a role in the regulation of behavior, including responses to anxiogenic situations and psychoactive substances. Plays a role in intestinal smooth muscle contraction, and may play a role in arterial vasoconstriction. The polypeptide is 5-hydroxytryptamine receptor 2A (HTR2A) (Cavia porcellus (Guinea pig)).